Reading from the N-terminus, the 83-residue chain is Toxin Aam1 (83 aa).

The first 19 residues, 1–19, serve as a signal peptide directing secretion; sequence MNYLVMISLALLLMIGVES. The LCN-type CS-alpha/beta domain occupies 21–82; the sequence is RDGYIVYPHN…PIYDRSYKCY (62 aa). Disulfide bonds link Cys31–Cys81, Cys35–Cys53, Cys39–Cys63, and Cys43–Cys65.

This sequence belongs to the long (4 C-C) scorpion toxin superfamily. Sodium channel inhibitor family. Alpha subfamily. In terms of processing, the C-terminal basic residue is removed by a carboxypeptidase. Expressed by the venom gland.

It is found in the secreted. Alpha toxins bind voltage-independently at site-3 of sodium channels (Nav) and inhibit the inactivation of the activated channels, thereby blocking neuronal transmission. The sequence is that of Toxin Aam1 (H1) from Androctonus amoreuxi (African fattail scorpion).